Consider the following 487-residue polypeptide: MAAPESLSPGATAEEAPEEDEDDAEAEDPERGTGSGGRSGSLGGSGGGTAGPGMALGGALTRRAVTLRVLLKDELLEPGEGVLSIYYLGRKFTGDLQLDGRIVWQETGQVFNSPSAWATHCKKLVNPAKKSGCGWASVKYKGQKLDKYKAAWLRRHQLHMPVATADESPTSEGEEEELLLEEEEEDVLAGVSSEDKGHRPPGKGSLEPEATPPGKRMDKVPVPIRYCMLGSRDSARNPHTLVEVTSFAAINKFQPFNVAVSSNVLFLLDFHCHLTRSEVVGYLGGRWDINNQMLTVLRAFPCRSRLGDTDTAATVEEEIYQVLFLRGLSLVGWYHSHPHSPAVPSLQDIDAQMEYQLRLQGSSNGFQPCLALLCSPYYSGNPGPESKICPFWVMPPPEQRPSDYGIPMDVEMAYVQDSFLTNDVLQEMVMLAEFYKGAPDLVKFQEAWSPEHTYLDKLKMSLASRTPKDQGMCHVLEQVCSVLKQGS.

Positions 1 to 55 (MAAPESLSPGATAEEAPEEDEDDAEAEDPERGTGSGGRSGSLGGSGGGTAGPGMA) are disordered. An N-acetylalanine modification is found at alanine 2. The residue at position 8 (serine 8) is a Phosphoserine. Positions 15 to 28 (EAPEEDEDDAEAED) are enriched in acidic residues. Residues 33–55 (TGSGGRSGSLGGSGGGTAGPGMA) are compositionally biased toward gly residues. Positions 61 to 156 (TRRAVTLRVL…KYKAAWLRRH (96 aa)) constitute an RAMA domain. Residues serine 113, serine 115, and tryptophan 135 each contribute to the DNA site. The interval 163–217 (ATADESPTSEGEEEELLLEEEEEDVLAGVSSEDKGHRPPGKGSLEPEATPPGKRM) is disordered. A phosphoserine mark is found at serine 168 and serine 171. Acidic residues predominate over residues 172 to 187 (EGEEEELLLEEEEEDV). The MPN domain maps to 258 to 393 (VAVSSNVLFL…PESKICPFWV (136 aa)). Zn(2+) is bound by residues histidine 335, histidine 337, and aspartate 348. Positions 335 to 348 (HSHPHSPAVPSLQD) match the JAMM motif motif.

The protein belongs to the peptidase M67 family. Monomer. Mainly monomoric, but when binds to dsDNA, forms homotetramer assembled into two homodimers. May interact with histones; this interaction is facilitated by. In terms of processing, degraded following binding to N(6)-methyladenosine methylated DNA (m6A).

Probable protease. Acts as a sensor of N(6)-methyladenosine methylation on DNA (m6A): recognizes and binds m6A DNA, leading to its degradation. Binds only double strand DNA (dsDNA) in a sequence-independent manner. In Mus musculus (Mouse), this protein is MPN domain-containing protein.